The following is a 362-amino-acid chain: tRNA-specific 2-thiouridylase MnmA 1 (362 aa).

ATP-binding positions include 12 to 19 (GMSGGVDS) and Met38. Catalysis depends on Cys104, which acts as the Nucleophile. Cysteines 104 and 200 form a disulfide. Gly128 contacts ATP. The segment at 150-152 (KDQ) is interaction with tRNA. Cys200 (cysteine persulfide intermediate) is an active-site residue. The interaction with tRNA stretch occupies residues 306–307 (RY).

It belongs to the MnmA/TRMU family.

The protein resides in the cytoplasm. It carries out the reaction S-sulfanyl-L-cysteinyl-[protein] + uridine(34) in tRNA + AH2 + ATP = 2-thiouridine(34) in tRNA + L-cysteinyl-[protein] + A + AMP + diphosphate + H(+). Its function is as follows. Catalyzes the 2-thiolation of uridine at the wobble position (U34) of tRNA, leading to the formation of s(2)U34. In Clostridium tetani (strain Massachusetts / E88), this protein is tRNA-specific 2-thiouridylase MnmA 1.